The following is a 642-amino-acid chain: MSLKKQQQQSDFSAAPARRPPTLQSYHTSPDPRGKQILRQSASFTALNNPRMDTALPQIQDAPSNSKRNSDEGFGTKPRRKNTFSSFVNSVLGSPRNIKISAPENPVHVTHVGYDNQTGQFTGLPKDWQRMLQASGISKKEQEQHPQTMVDIMRFYERNAAGAGDEEVWHKFDNAILRQGEYPDGMSPASATSPRFPQNHEGSFENPRAAPPPPKPSQSSPVPVLSSTIVPNRVAPKPPTVGLIPSRPPPQPPVVSNRAPAARPANEPVTTPPIPENEPVFVNAPPVVPSAIQSPVQYQQQQERAMAAAQQAIIDKQLDRSRSQPAAAVARPRPRTRQSTAFDVRAKLQAICTPGDPTKKYYNLNKIGQGASGGVFTAYETNTNKCVAIKQMNLDLQPKKDLIINEILVMKDSKHKNIVNFLDSYLHGLDLWVVMEYMEGGSLTDVVTFNIMSEGQIAAVCRETLSGLQHLHSKGVIHRDIKSDNILLSMDGEIKLTDFGFCAQINDSQNKRNTMVGTPYWMAPEVVTRKEYGRKVDIWSLGIMAIEMIEGEPPYLTESPLRALYLIATNGTPKIKDEQNLSPVFRDFLHLALRVDPEKRASAHDLLKHPFMSICEPLNSLAPLVKSARISRAQEKAQKGGA.

Polar residues-rich tracts occupy residues Met-1–Phe-12 and Leu-38–Asn-48. The tract at residues Met-1 to Asn-82 is disordered. One can recognise a CRIB domain in the interval Ile-100–Gly-113. Disordered stretches follow at residues Gly-180 to Glu-276 and Gln-317 to Gln-338. 2 stretches are compositionally biased toward low complexity: residues Ser-217–Ser-227 and Val-254–Asn-266. In terms of domain architecture, Protein kinase spans Tyr-361–Met-612. ATP is bound by residues Ile-367 to Val-375 and Lys-390. The Proton acceptor role is filled by Asp-480.

The protein belongs to the protein kinase superfamily. STE Ser/Thr protein kinase family. STE20 subfamily.

It is found in the cytoplasm. The protein localises to the nucleus. It catalyses the reaction L-seryl-[protein] + ATP = O-phospho-L-seryl-[protein] + ADP + H(+). The enzyme catalyses L-threonyl-[protein] + ATP = O-phospho-L-threonyl-[protein] + ADP + H(+). In terms of biological role, MAP4K component of the MAPK pathway required for the mating pheromone response and the regulation of cell polarity and cell cycle. This chain is Serine/threonine-protein kinase pakA (pakA), found in Talaromyces marneffei (Penicillium marneffei).